The sequence spans 33 residues: Cecropin-C (33 aa).

A 5-hydroxylysine modification is found at lysine 21.

In terms of assembly, monomer. In terms of tissue distribution, hemolymph.

It localises to the secreted. Its function is as follows. Cecropins have lytic and antibacterial activity against several Gram-positive and Gram-negative bacteria. Also has activity against fungi. This Heliothis virescens (Tobacco budworm moth) protein is Cecropin-C.